The following is a 379-amino-acid chain: MPLINLPAFAGDLLADFERRNTLRVDTPVIQPAEPFLDMAGEDLRRRIFMTESETGESLCLRPEFTIPVCLRHIETATGTPQRYAYLGEVFRQRREGSSEFYQAGIEDLGDPDTAAADARVVGDAMFVLANRLPGERLKVTLGDQSVFEAVIAACGLPGGWQKRLIHAFGDQKQLERLLAALADPKSPGVFGHDVERVAALGMLEDEERLVAHIGETMKATGYSTNAGRSPRDIARRLKEKVELAAIRLDKEALGVMRAFLALDLPLADAPAALHRFAGKARLKIDDALALFDARVAALARAGADPGLMRYRAAFGRPLDYYTGLVFEIGVEGTPAVLAGGGRFDRLLTLLGAREHIPAVGFSLWLDRIEQAIAAGRAE.

This sequence belongs to the class-II aminoacyl-tRNA synthetase family. HisZ subfamily. Heteromultimer composed of HisG and HisZ subunits.

The protein resides in the cytoplasm. The protein operates within amino-acid biosynthesis; L-histidine biosynthesis; L-histidine from 5-phospho-alpha-D-ribose 1-diphosphate: step 1/9. In terms of biological role, required for the first step of histidine biosynthesis. May allow the feedback regulation of ATP phosphoribosyltransferase activity by histidine. This Rhizobium meliloti (strain 1021) (Ensifer meliloti) protein is ATP phosphoribosyltransferase regulatory subunit (hisZ).